Here is a 289-residue protein sequence, read N- to C-terminus: tRNA dimethylallyltransferase (289 aa).

9–16 (GTTASGKT) provides a ligand contact to ATP. 11–16 (TASGKT) is a substrate binding site. The interval 34-37 (DSLC) is interaction with substrate tRNA.

This sequence belongs to the IPP transferase family. Monomer. Mg(2+) is required as a cofactor.

The enzyme catalyses adenosine(37) in tRNA + dimethylallyl diphosphate = N(6)-dimethylallyladenosine(37) in tRNA + diphosphate. In terms of biological role, catalyzes the transfer of a dimethylallyl group onto the adenine at position 37 in tRNAs that read codons beginning with uridine, leading to the formation of N6-(dimethylallyl)adenosine (i(6)A). In Campylobacter jejuni subsp. doylei (strain ATCC BAA-1458 / RM4099 / 269.97), this protein is tRNA dimethylallyltransferase.